A 379-amino-acid polypeptide reads, in one-letter code: Glucose-1-phosphate adenylyltransferase (379 aa).

Residues Gly164, 179–180 (EK), and Ser190 each bind alpha-D-glucose 1-phosphate.

Belongs to the bacterial/plant glucose-1-phosphate adenylyltransferase family. As to quaternary structure, homotetramer.

The enzyme catalyses alpha-D-glucose 1-phosphate + ATP + H(+) = ADP-alpha-D-glucose + diphosphate. It participates in glycan biosynthesis; glycogen biosynthesis. Functionally, involved in the biosynthesis of ADP-glucose, a building block required for the elongation reactions to produce glycogen. Catalyzes the reaction between ATP and alpha-D-glucose 1-phosphate (G1P) to produce pyrophosphate and ADP-Glc. The chain is Glucose-1-phosphate adenylyltransferase from Streptococcus agalactiae serotype Ia (strain ATCC 27591 / A909 / CDC SS700).